A 252-amino-acid chain; its full sequence is tRNA (guanine-N(1)-)-methyltransferase (252 aa).

Residues G110 and 130–135 contribute to the S-adenosyl-L-methionine site; that span reads VGDFVL.

This sequence belongs to the RNA methyltransferase TrmD family. Homodimer.

The protein localises to the cytoplasm. It catalyses the reaction guanosine(37) in tRNA + S-adenosyl-L-methionine = N(1)-methylguanosine(37) in tRNA + S-adenosyl-L-homocysteine + H(+). Specifically methylates guanosine-37 in various tRNAs. The sequence is that of tRNA (guanine-N(1)-)-methyltransferase from Magnetococcus marinus (strain ATCC BAA-1437 / JCM 17883 / MC-1).